We begin with the raw amino-acid sequence, 361 residues long: Chorismate synthase (361 aa).

R47 contributes to the NADP(+) binding site. FMN is bound by residues 124 to 126 (RAS), G286, 301 to 305 (KPTAT), and R327.

It belongs to the chorismate synthase family. In terms of assembly, homotetramer. Requires FMNH2 as cofactor.

The enzyme catalyses 5-O-(1-carboxyvinyl)-3-phosphoshikimate = chorismate + phosphate. Its pathway is metabolic intermediate biosynthesis; chorismate biosynthesis; chorismate from D-erythrose 4-phosphate and phosphoenolpyruvate: step 7/7. In terms of biological role, catalyzes the anti-1,4-elimination of the C-3 phosphate and the C-6 proR hydrogen from 5-enolpyruvylshikimate-3-phosphate (EPSP) to yield chorismate, which is the branch point compound that serves as the starting substrate for the three terminal pathways of aromatic amino acid biosynthesis. This reaction introduces a second double bond into the aromatic ring system. The chain is Chorismate synthase from Prochlorococcus marinus (strain NATL1A).